A 515-amino-acid polypeptide reads, in one-letter code: Probable malate:quinone oxidoreductase (515 aa).

This sequence belongs to the MQO family. FAD serves as cofactor.

It carries out the reaction (S)-malate + a quinone = a quinol + oxaloacetate. It participates in carbohydrate metabolism; tricarboxylic acid cycle; oxaloacetate from (S)-malate (quinone route): step 1/1. In Blochmanniella pennsylvanica (strain BPEN), this protein is Probable malate:quinone oxidoreductase.